We begin with the raw amino-acid sequence, 558 residues long: Atlastin-1 (558 aa).

The tract at residues 1–29 is disordered; that stretch reads MAKSRRDRNSWGGFSEKSSDWSSEEEEPV. Residues 1–34 form an N-terminal hypervariable region (HVR) region; that stretch reads MAKSRRDRNSWGGFSEKSSDWSSEEEEPVRKAGP. Residues 1-449 lie on the Cytoplasmic side of the membrane; the sequence is MAKSRRDRNS…NIFHAARTPA (449 aa). Phosphoserine occurs at positions 10, 22, and 23. One can recognise a GB1/RHD3-type G domain in the interval 64–309; sequence DKEVVAVSVA…LIPWLLSPES (246 aa). Positions 77, 78, 79, 80, 81, 82, 148, 217, 218, 276, and 279 each coordinate GDP. Residues arginine 77, lysine 78, glycine 79, lysine 80, serine 81, and phenylalanine 82 each coordinate GTP. Serine 81 contributes to the Mg(2+) binding site. Arginine 217, aspartate 218, and valine 276 together coordinate GTP. The segment at 347 to 438 is 3HB (three-helix bundle) domain; it reads MLQATAEANN…YIQYIKHNDS (92 aa). Position 395 is an N6-acetyllysine (lysine 395). A coiled-coil region spans residues 412-439; it reads EFSRRYLQQLESEIDELYIQYIKHNDSK. A linker region spans residues 439-447; the sequence is KNIFHAART. The chain crosses the membrane as a helical span at residues 450-470; it reads TLFVVIFITYVIAGVTGFIGL. Residue aspartate 471 is a topological domain, lumenal. A helical membrane pass occupies residues 472–492; that stretch reads IIASLCNMIMGLTLITLCTWA. Residues 493-558 are Cytoplasmic-facing; it reads YIRYSGEYRE…PTEQPEKKKI (66 aa). The autoinhibitory domain stretch occupies residues 521-558; sequence NEALYKLYSAAATHRHLYQQAFPAPKSEPTEQPEKKKI.

The protein belongs to the TRAFAC class dynamin-like GTPase superfamily. GB1/RHD3 GTPase family. GB1 subfamily. As to quaternary structure, monomeric and homodimeric. The homodimer, transiently formed by two molecules on opposing membranes, is the active form mediating ER membrane fusion. Interacts with REEP1, REEP5, RTN3 and RTN4 (via the transmembrane region); these proteins are involved in endoplasmic reticulum tubular network organization. Interacts with ZFYVE27; both proteins are involved in endoplasmic reticulum tubular network organization. Interacts with ARL6IP1; both proteins are involved in endoplasmic reticulum tubular network organization. Interacts with SPAST; the interaction is direct, could recruit SPAST to Golgi membranes. Interacts (via N-terminal region) with MAP4K4 (via CNH regulatory domain). May interact with TMED2. Interacts with CPT1C. Post-translationally, phosphorylated. Phosphorylation, by different kinases, of the N-terminal hypervariable region (HVR) regulates the ATL1-mediated membrane tethering step. As to expression, detected in brain where it is abundant in lamina V of the cerebral cortex. Also expressed within the hippocampus, mainly in pyramidal neurons in CA1 and CA3. Weakly expressed in the striatum and more robustly in amygdala and several thalamic nuclei. Also detected in several mesopontine nuclei (at protein level).

It localises to the endoplasmic reticulum membrane. Its subcellular location is the golgi apparatus membrane. The protein resides in the cell projection. It is found in the axon. The catalysed reaction is GTP + H2O = GDP + phosphate + H(+). Functionally, atlastin-1 (ATL1) is a membrane-anchored GTPase that mediates the GTP-dependent fusion of endoplasmic reticulum (ER) membranes, maintaining the continuous ER network. It facilitates the formation of three-way junctions where ER tubules intersect. Two atlastin-1 on neighboring ER tubules bind GTP and form loose homodimers through the GB1/RHD3-type G domains and 3HB regions. Upon GTP hydrolysis, the 3HB regions tighten, pulling the membranes together to drive their fusion. After fusion, the homodimer disassembles upon release of inorganic phosphate (Pi). Subsequently, GDP dissociates, resetting the monomers to a conformation ready for a new fusion cycle. May also regulate more or less directly Golgi biogenesis. Indirectly regulates axonal development. The polypeptide is Atlastin-1 (Rattus norvegicus (Rat)).